The chain runs to 666 residues: Amyloid beta A4 precursor protein-binding family B member 1-interacting protein (666 aa).

Ser-55 bears the Phosphoserine mark. Residues 122–155 (SQYEDDLPPPPADPVLDLPLPPPPPEPLSQEEEE) are disordered. A compositionally biased stretch (pro residues) spans 129 to 148 (PPPPADPVLDLPLPPPPPEP). The Ras-associating domain occupies 176–263 (KKLVVKVHMN…KILFLEKEEK (88 aa)). The PH domain maps to 310-419 (VPELEGALYL…WVMGIRIAKY (110 aa)). Positions 448-666 (AAAPAQPSTG…ALQKKRGNVS (219 aa)) are disordered. The span at 453–478 (QPSTGPKTGTTQPNGQIPQATHSVSA) shows a compositional bias: polar residues. Residues 483–504 (AQRHAETSKDKKPALGNHHDPA) are compositionally biased toward basic and acidic residues. Phosphoserine is present on Ser-526. Thr-528 carries the phosphothreonine modification. A Phosphoserine modification is found at Ser-531. Composition is skewed to pro residues over residues 547–589 (PAPP…PPPS) and 598–631 (LPPP…PVPP).

The protein belongs to the MRL family. Interacts, through the N-terminal Pro-rich region, with the WW domain of APBB1. Interacts with RAP1A, PFN1, TLN1, VASP, VCL and ENAH. Widely expressed with high expression in thymus, spleen, lymph node, bone marrow and peripheral leukocytes.

The protein localises to the cell membrane. It localises to the cell projection. The protein resides in the lamellipodium. It is found in the cell junction. Its subcellular location is the focal adhesion. The protein localises to the cytoplasm. It localises to the cytoskeleton. Appears to function in the signal transduction from Ras activation to actin cytoskeletal remodeling. Suppresses insulin-induced promoter activities through AP1 and SRE. Mediates Rap1-induced adhesion. This Homo sapiens (Human) protein is Amyloid beta A4 precursor protein-binding family B member 1-interacting protein (APBB1IP).